The chain runs to 155 residues: Small ribosomal subunit protein uS7c (155 aa).

The protein belongs to the universal ribosomal protein uS7 family. As to quaternary structure, part of the 30S ribosomal subunit.

It is found in the plastid. It localises to the chloroplast. One of the primary rRNA binding proteins, it binds directly to 16S rRNA where it nucleates assembly of the head domain of the 30S subunit. This is Small ribosomal subunit protein uS7c (rps7) from Cornus mas (Cornelian cherry dogwood).